Reading from the N-terminus, the 139-residue chain is D-ribose pyranase (139 aa).

Residue His-20 is the Proton donor of the active site. Residues Asp-28, His-106, and 128–130 (YAN) contribute to the substrate site.

It belongs to the RbsD / FucU family. RbsD subfamily. Homodecamer.

The protein localises to the cytoplasm. It carries out the reaction beta-D-ribopyranose = beta-D-ribofuranose. It functions in the pathway carbohydrate metabolism; D-ribose degradation; D-ribose 5-phosphate from beta-D-ribopyranose: step 1/2. Catalyzes the interconversion of beta-pyran and beta-furan forms of D-ribose. This Pectobacterium carotovorum subsp. carotovorum (strain PC1) protein is D-ribose pyranase.